The primary structure comprises 481 residues: FAD-linked oxidoreductase afoF (481 aa).

The N-terminal stretch at M1–A16 is a signal peptide. Residues S52–Q227 enclose the FAD-binding PCMH-type domain. N82 is a glycosylation site (N-linked (GlcNAc...) asparagine). H92 is modified (pros-8alpha-FAD histidine). Residues N196, N241, N276, N309, N312, and N376 are each glycosylated (N-linked (GlcNAc...) asparagine).

Belongs to the oxygen-dependent FAD-linked oxidoreductase family. The cofactor is FAD.

Its function is as follows. FAD-linked oxidoreductase; part of the gene cluster that mediates the biosynthesis of asperfuranone, a probable antitumor agent. The polyketide synthase afoG is responsible for producing the 3,5-dimethyloctadienone moiety from acetyl-CoA, three malonyl-CoA, and two S-adenosyl methionines (SAM). The 3,5-dimethyloctadienone moiety is then loaded onto the SAT domain of afoE and extended with four malonyl-CoA and one SAM, which leads to the formation of 2,4-dihydroxy-6-(5,7-dimethyl-2-oxo-trans-3-trans-5-nonadienyl)-3-methylbenzaldehyde (compound 2) after reductive release and aldol condensation. AfoD is the next enzyme in the biosynthesis sequence and hydroxylates the side chain at the benzylic position of compound 2. After benzylic hydroxylation, a furan ring is formed after five-member ring hemiacetal formation and water elimination. AfoF and afoC are proposed to oxidize the R-diketone proton and to reduce the unconjugated carbonyl group, respectively, to generate asperfuranone. Since no intermediates could be isolated from afoF and afoC deletants, the sequence of these two enzymes is not fully understood. Moreover, since afoC deletant still produces a small amount of asperfuranone, other endogenous oxidoreductases might catalyze the same reaction with much less efficiency. The chain is FAD-linked oxidoreductase afoF from Emericella nidulans (strain FGSC A4 / ATCC 38163 / CBS 112.46 / NRRL 194 / M139) (Aspergillus nidulans).